A 132-amino-acid chain; its full sequence is Glycine cleavage system H protein (132 aa).

One can recognise a Lipoyl-binding domain in the interval 24 to 106; it reads RVRVGITDYA…YGAGWLFELE (83 aa). At Lys65 the chain carries N6-lipoyllysine.

The protein belongs to the GcvH family. As to quaternary structure, the glycine cleavage system is composed of four proteins: P, T, L and H. The cofactor is (R)-lipoate.

Its function is as follows. The glycine cleavage system catalyzes the degradation of glycine. The H protein shuttles the methylamine group of glycine from the P protein to the T protein. The protein is Glycine cleavage system H protein of Nocardia farcinica (strain IFM 10152).